A 631-amino-acid polypeptide reads, in one-letter code: Pescadillo homolog (631 aa).

Positions 321–414 (RLRTLFKGLK…QLLPTNDYFL (94 aa)) constitute a BRCT domain. Positions 428 to 442 (SKRDSYIPPEEKALH) are enriched in basic and acidic residues. Disordered regions lie at residues 428–471 (SKRD…EADQ) and 489–560 (YKKY…EVDE). Phosphoserine occurs at positions 453 and 457. 2 stretches are compositionally biased toward acidic residues: residues 453–471 (SEEESEEDEAEKEEEEADQ) and 498–525 (VNEDEEDLSEEDDEEDDDEEDVDKEDVD). The span at 526–538 (EQTKRKQQEKEKM) shows a compositional bias: basic and acidic residues. Over residues 544-553 (KVHKVNKRQV) the composition is skewed to basic residues. The stretch at 593-629 (LRKKRRNIDADTKEAKKAAKREARKLAAEAAARAAKL) forms a coiled coil.

Belongs to the pescadillo family.

Its subcellular location is the nucleus. It is found in the nucleolus. The protein resides in the nucleoplasm. Functionally, required for maturation of ribosomal RNAs and formation of the large ribosomal subunit. This chain is Pescadillo homolog, found in Drosophila persimilis (Fruit fly).